The primary structure comprises 234 residues: Small ribosomal subunit protein uS3 (234 aa).

Residues 39-109 (IRTLINKHYG…EVRIAIYEVK (71 aa)) form the KH type-2 domain.

It belongs to the universal ribosomal protein uS3 family. As to quaternary structure, part of the 30S ribosomal subunit. Forms a tight complex with proteins S10 and S14.

Binds the lower part of the 30S subunit head. Binds mRNA in the 70S ribosome, positioning it for translation. The sequence is that of Small ribosomal subunit protein uS3 from Coprothermobacter proteolyticus (strain ATCC 35245 / DSM 5265 / OCM 4 / BT).